Here is a 968-residue protein sequence, read N- to C-terminus: RNA polymerase-associated protein RapA (968 aa).

The region spanning 164–334 is the Helicase ATP-binding domain; that stretch reads DVGRRHAPRV…FARLRLLDPN (171 aa). 177-184 provides a ligand contact to ATP; the sequence is DEVGLGKT. The DEAH box motif lies at 280 to 283; sequence DEAH. One can recognise a Helicase C-terminal domain in the interval 490–685; sequence RVEWLMGYLT…ALKAQLEQGR (196 aa).

This sequence belongs to the SNF2/RAD54 helicase family. RapA subfamily. In terms of assembly, interacts with the RNAP. Has a higher affinity for the core RNAP than for the holoenzyme. Its ATPase activity is stimulated by binding to RNAP.

Functionally, transcription regulator that activates transcription by stimulating RNA polymerase (RNAP) recycling in case of stress conditions such as supercoiled DNA or high salt concentrations. Probably acts by releasing the RNAP, when it is trapped or immobilized on tightly supercoiled DNA. Does not activate transcription on linear DNA. Probably not involved in DNA repair. This Salmonella newport (strain SL254) protein is RNA polymerase-associated protein RapA.